The sequence spans 247 residues: MNKFEFNLENFDGPLDLLLSLVKDKKADLFTIDLADLATQYLEIINHLEDSNVDVASEYLVMAATLIHIKAKMLLLNPEEEDEEIKEDKEMLLKQLIEYQQFKEVAKKLRQQESIRSEIFIKDPSNYDEYYRETDETLLDGRSNSLSLMNTLRKMFERVHAENLRQTKIEAVHVNPEQRIKEIRDLFDEFGEEVDFAKIFNVPTITHFVITFLVLLDLARKQEIKLIQDKEFGEIRIIKIKGVENEQ.

It belongs to the ScpA family. Component of a cohesin-like complex composed of ScpA, ScpB and the Smc homodimer, in which ScpA and ScpB bind to the head domain of Smc. The presence of the three proteins is required for the association of the complex with DNA.

It localises to the cytoplasm. Participates in chromosomal partition during cell division. May act via the formation of a condensin-like complex containing Smc and ScpB that pull DNA away from mid-cell into both cell halves. The protein is Segregation and condensation protein A of Mycoplasma mobile (strain ATCC 43663 / 163K / NCTC 11711) (Mesomycoplasma mobile).